Consider the following 497-residue polypeptide: Acetyl-coenzyme A carboxylase carboxyl transferase subunit beta, chloroplastic (497 aa).

The interval 30–50 (GPVENTTVNEDPTRNDTDKNI) is disordered. The span at 40–50 (DPTRNDTDKNI) shows a compositional bias: basic and acidic residues. One can recognise a CoA carboxyltransferase N-terminal domain in the interval 230 to 497 (VQCECENCYG…FFPLNQNSIK (268 aa)). Zn(2+) is bound by residues Cys-232, Cys-237, Cys-253, and Cys-256. The segment at 232-256 (CECENCYGVNYKKSLNSKMNICEQC) adopts a C4-type zinc-finger fold.

It belongs to the AccD/PCCB family. In terms of assembly, acetyl-CoA carboxylase is a heterohexamer composed of biotin carboxyl carrier protein, biotin carboxylase and 2 subunits each of ACCase subunit alpha and ACCase plastid-coded subunit beta (accD). It depends on Zn(2+) as a cofactor.

It localises to the plastid. The protein localises to the chloroplast stroma. The catalysed reaction is N(6)-carboxybiotinyl-L-lysyl-[protein] + acetyl-CoA = N(6)-biotinyl-L-lysyl-[protein] + malonyl-CoA. It functions in the pathway lipid metabolism; malonyl-CoA biosynthesis; malonyl-CoA from acetyl-CoA: step 1/1. Its function is as follows. Component of the acetyl coenzyme A carboxylase (ACC) complex. Biotin carboxylase (BC) catalyzes the carboxylation of biotin on its carrier protein (BCCP) and then the CO(2) group is transferred by the transcarboxylase to acetyl-CoA to form malonyl-CoA. The sequence is that of Acetyl-coenzyme A carboxylase carboxyl transferase subunit beta, chloroplastic from Gossypium hirsutum (Upland cotton).